The following is a 389-amino-acid chain: ELAV-like protein 2 (389 aa).

3 RRM domains span residues 66-145 (TNLI…YARP), 153-233 (ANLY…FANN), and 306-384 (WCIF…FKTS).

It belongs to the RRM elav family. In terms of assembly, part of a ribonucleoprotein (RNP) complex, at least composed of elavl1/elrA and/or elavl2/elrB, igf2bp3/vg1RBP, ddx6/Xp54, ybx2/frgy2, lsm14b/rap55b and, in a subset of RNP complexes, stau1/staufen. Binds RNA as a homooligomer. Expressed in brain, testis and ovary. Ovarian expression is restricted to follicle cells surrounding the oocyte. From the early tailbud stage, expression is neural-specific and is seen in both the central and peripheral nervous system in differentiating neurons but not proliferating precursors. Expressed in the retina from stage 32 with expression becoming restricted to the ganglion cell layer by later stages.

The protein resides in the cytoplasm. It localises to the cell cortex. Binds to poly-U elements and AU-rich elements (AREs) in the 3'-UTR of target mRNAs. Required for the vegetal localization of vg1 mRNA. Probably required for nervous system development. The protein is ELAV-like protein 2 (elavl2) of Xenopus laevis (African clawed frog).